The sequence spans 120 residues: Putative pterin-4-alpha-carbinolamine dehydratase (120 aa).

The protein belongs to the pterin-4-alpha-carbinolamine dehydratase family.

The catalysed reaction is (4aS,6R)-4a-hydroxy-L-erythro-5,6,7,8-tetrahydrobiopterin = (6R)-L-erythro-6,7-dihydrobiopterin + H2O. In Bdellovibrio bacteriovorus (strain ATCC 15356 / DSM 50701 / NCIMB 9529 / HD100), this protein is Putative pterin-4-alpha-carbinolamine dehydratase.